A 464-amino-acid chain; its full sequence is Vitamin D3 hydroxylase-associated protein (464 aa).

Residues K150 and S225 each act as charge relay system in the active site. The Acyl-ester intermediate role is filled by S249.

The protein belongs to the amidase family. As to expression, kidney.

It localises to the mitochondrion inner membrane. May have a vitamin D3 hydroxylase regulatory function. This chain is Vitamin D3 hydroxylase-associated protein, found in Gallus gallus (Chicken).